We begin with the raw amino-acid sequence, 560 residues long: Putative transport protein VS_1837 (560 aa).

5 helical membrane-spanning segments follow: residues 5–25 (VVLLLKQNPILLIFVVLSIGL), 37–57 (LGNSIGVLITSLIMGHLGFSF), 66–86 (FMLFIYCVGIEAGPNFFGIFF), 91–111 (HYLILSLVVLSTAIALTYFCS), and 155–175 (LGLVIENLSVGYAMAYLVGLI). RCK C-terminal domains follow at residues 203–292 (RGLG…FRNG) and 293–376 (KEVF…KIGF). A run of 6 helical transmembrane segments spans residues 386–406 (LTAFCSFFILGILFGLITMTF), 409–429 (VSFGLGNAVGLLLSGIMLGFL), 450–470 (LGLMFFMVGIGLSAGGKIFEH), 478–498 (VIGIALIVSVLPVFFAYLVGA), 506–526 (ALLFGAIIGARTCAPAMDIVN), and 539–559 (AGTYAIANILMTLAGTFIIII).

This sequence belongs to the AAE transporter (TC 2.A.81) family. YbjL subfamily.

It localises to the cell membrane. The protein is Putative transport protein VS_1837 of Vibrio atlanticus (strain LGP32) (Vibrio splendidus (strain Mel32)).